Here is a 293-residue protein sequence, read N- to C-terminus: Probable endonuclease 4 (293 aa).

Residues histidine 75, histidine 115, glutamate 153, aspartate 187, histidine 190, histidine 224, aspartate 237, histidine 239, and glutamate 269 each coordinate Zn(2+).

The protein belongs to the AP endonuclease 2 family. Zn(2+) is required as a cofactor.

It carries out the reaction Endonucleolytic cleavage to 5'-phosphooligonucleotide end-products.. Endonuclease IV plays a role in DNA repair. It cleaves phosphodiester bonds at apurinic or apyrimidinic (AP) sites, generating a 3'-hydroxyl group and a 5'-terminal sugar phosphate. The protein is Probable endonuclease 4 of Chlamydia pneumoniae (Chlamydophila pneumoniae).